The sequence spans 858 residues: DNA mismatch repair protein MutS (858 aa).

613–620 contributes to the ATP binding site; it reads GPNMAGKS.

Belongs to the DNA mismatch repair MutS family.

In terms of biological role, this protein is involved in the repair of mismatches in DNA. It is possible that it carries out the mismatch recognition step. This protein has a weak ATPase activity. The sequence is that of DNA mismatch repair protein MutS from Dehalococcoides mccartyi (strain ATCC BAA-2100 / JCM 16839 / KCTC 5957 / BAV1).